The following is a 123-amino-acid chain: UPF0102 protein Mflv_4140 (123 aa).

This sequence belongs to the UPF0102 family.

This is UPF0102 protein Mflv_4140 from Mycolicibacterium gilvum (strain PYR-GCK) (Mycobacterium gilvum (strain PYR-GCK)).